A 239-amino-acid polypeptide reads, in one-letter code: Heptaprenylglyceryl phosphate synthase (239 aa).

K12 contributes to the sn-glycerol 1-phosphate binding site. The Mg(2+) site is built by D14 and T40. Sn-glycerol 1-phosphate is bound by residues 159–164 (YLEYSG), G189, and 209–210 (GN).

This sequence belongs to the GGGP/HepGP synthase family. Group I subfamily. In terms of assembly, homodimer. The cofactor is Mg(2+).

The enzyme catalyses sn-glycerol 1-phosphate + all-trans-heptaprenyl diphosphate = 3-heptaprenyl-sn-glycero-1-phosphate + diphosphate. It participates in membrane lipid metabolism; glycerophospholipid metabolism. Functionally, prenyltransferase that catalyzes in vivo the transfer of the heptaprenyl moiety of heptaprenyl pyrophosphate (HepPP; 35 carbon atoms) to the C3 hydroxyl of sn-glycerol-1-phosphate (G1P), producing heptaprenylglyceryl phosphate (HepGP). This reaction is an ether-bond-formation step in the biosynthesis of archaea-type G1P-based membrane lipids found in Bacillales. To a much lesser extent, is also able to use geranylgeranyl diphosphate (GGPP; C20) as the prenyl donor. The protein is Heptaprenylglyceryl phosphate synthase of Geobacillus kaustophilus (strain HTA426).